The sequence spans 226 residues: Large ribosomal subunit protein uL1 (226 aa).

The protein belongs to the universal ribosomal protein uL1 family. Part of the 50S ribosomal subunit.

Functionally, binds directly to 23S rRNA. The L1 stalk is quite mobile in the ribosome, and is involved in E site tRNA release. Its function is as follows. Protein L1 is also a translational repressor protein, it controls the translation of the L11 operon by binding to its mRNA. In Mycoplasma genitalium (strain ATCC 33530 / DSM 19775 / NCTC 10195 / G37) (Mycoplasmoides genitalium), this protein is Large ribosomal subunit protein uL1.